Consider the following 648-residue polypeptide: Proton myo-inositol cotransporter (648 aa).

At 1–76 (MSRKASENVE…AARRQFQQDE (76 aa)) the chain is on the cytoplasmic side. Residues serine 6, serine 47, and serine 50 each carry the phosphoserine modification. The helical transmembrane segment at 77–97 (TPAFVYVVAVFSALGGFLFGY) threads the bilayer. Residues 98–125 (DTGVVSGAMLLLKRQLSLDALWQELLVS) lie on the Extracellular side of the membrane. A helical membrane pass occupies residues 126–146 (STVGAAAVSALAGGALNGVFG). The Cytoplasmic segment spans residues 147-148 (RR). A helical transmembrane segment spans residues 149–169 (AAILLASALFTAGSAVLAAAN). Residues 170–178 (NKETLLAGR) are Extracellular-facing. A helical transmembrane segment spans residues 179-199 (LVVGLGIGIASMTVPVYIAEV). Residues 200 to 212 (SPPNLRGRLVTIN) are Cytoplasmic-facing. The chain crosses the membrane as a helical span at residues 213–233 (TLFITGGQFFASVVDGAFSYL). Residues 234 to 239 (QKDGWR) are Extracellular-facing. Residues 240–260 (YMLGLAAVPAVIQFFGFLFLP) form a helical membrane-spanning segment. Over 261-324 (ESPRWLIQKG…RMLSYPPTRR (64 aa)) the chain is Cytoplasmic. The helical transmembrane segment at 325-345 (ALIVGCGLQMFQQLSGINTIM) threads the bilayer. The Extracellular segment spans residues 346–363 (YYSATILQMSGVEDDRLA). The helical transmembrane segment at 364–384 (IWLASVTAFTNFIFTLVGVWL) threads the bilayer. The Cytoplasmic segment spans residues 385–393 (VEKVGRRKL). Residues 394-414 (TFGSLAGTTVALIILALGFVL) form a helical membrane-spanning segment. The Extracellular portion of the chain corresponds to 415 to 508 (SAQVSPRITF…NFCPTPYSWT (94 aa)). N-linked (GlcNAc...) asparagine glycans are attached at residues asparagine 433, asparagine 458, and asparagine 485. The chain crosses the membrane as a helical span at residues 509 to 529 (ALLGLILYLVFFAPGMGPMPW). Over 530–549 (TVNSEIYPLWARSTGNACSS) the chain is Cytoplasmic. A helical membrane pass occupies residues 550–570 (GINWIFNVLVSLTFLHTAEYL). The Extracellular segment spans residues 571 to 573 (TYY). A helical transmembrane segment spans residues 574–594 (GAFFLYAGFAAVGLLFIYGCL). Over 595–648 (PETKGKKLEEIESLFDNRLCTCGTSDSDEGRYIEYIRVKGSNYHLSDNDASDVE) the chain is Cytoplasmic. Residues serine 640 and serine 645 each carry the phosphoserine modification.

Belongs to the major facilitator superfamily. Sugar transporter (TC 2.A.1.1) family. Glycosylated. Predominantly expressed in the brain.

The protein resides in the cell membrane. The enzyme catalyses myo-inositol(out) + H(+)(out) = myo-inositol(in) + H(+)(in). Its function is as follows. H(+)-myo-inositol cotransporter. Can also transport related stereoisomers. This Homo sapiens (Human) protein is Proton myo-inositol cotransporter.